The primary structure comprises 917 residues: Translation initiation factor IF-2 (917 aa).

2 disordered regions span residues 1–84 and 150–318; these read MSDG…GRAG and KESE…DRER. A compositionally biased stretch (polar residues) spans 10 to 27; it reads DGNNTPSQGGEQTRSSRL. Composition is skewed to low complexity over residues 69 to 84, 154 to 177, and 227 to 236; these read AAGPGAGAAARGGRAG, QQAAREQAAAEAAARAAEQAAAEA, and SRPAAAAPAR. A compositionally biased stretch (pro residues) spans 265-274; that stretch reads GAPPAPPRRP. The segment covering 282–305 has biased composition (basic and acidic residues); sequence GGSDRRSGRIDVRAAIEGDDDKTR. One can recognise a tr-type G domain in the interval 416–586; sequence PRAPVVTVMG…LLQSEMLDLK (171 aa). The tract at residues 425-432 is G1; it reads GHVDHGKT. 425 to 432 serves as a coordination point for GTP; sequence GHVDHGKT. Residues 450-454 are G2; that stretch reads GITQH. Positions 472-475 are G3; the sequence is DTPG. Residues 472 to 476 and 526 to 529 contribute to the GTP site; these read DTPGH and NKID. The G4 stretch occupies residues 526–529; that stretch reads NKID. Residues 562-564 form a G5 region; the sequence is SAL.

It belongs to the TRAFAC class translation factor GTPase superfamily. Classic translation factor GTPase family. IF-2 subfamily.

It is found in the cytoplasm. Its function is as follows. One of the essential components for the initiation of protein synthesis. Protects formylmethionyl-tRNA from spontaneous hydrolysis and promotes its binding to the 30S ribosomal subunits. Also involved in the hydrolysis of GTP during the formation of the 70S ribosomal complex. The sequence is that of Translation initiation factor IF-2 from Gluconobacter oxydans (strain 621H) (Gluconobacter suboxydans).